An 86-amino-acid chain; its full sequence is Weak neurotoxin 8 (86 aa).

A signal peptide spans 1–21 (MKTLLLTLVVVTIVCLDLGYT). 5 disulfides stabilise this stretch: cysteine 24–cysteine 45, cysteine 27–cysteine 32, cysteine 38–cysteine 63, cysteine 67–cysteine 78, and cysteine 79–cysteine 84.

It belongs to the three-finger toxin family. Ancestral subfamily. Orphan group II sub-subfamily. Expressed by the venom gland.

The protein localises to the secreted. Binds with low affinity to muscular (alpha-1-beta-1-delta-epsilon/CHRNA1-CHRNB1-CHRND-CHRNE) and very low affinity to neuronal (alpha-7/CHRNA7) nicotinic acetylcholine receptor (nAChR). The chain is Weak neurotoxin 8 from Naja sputatrix (Malayan spitting cobra).